We begin with the raw amino-acid sequence, 257 residues long: NAD-capped RNA hydrolase NudC (257 aa).

2 residues coordinate substrate: lysine 27 and arginine 71. Zn(2+) contacts are provided by cysteine 100 and cysteine 103. Glutamate 113 serves as a coordination point for substrate. Zn(2+) is bound by residues cysteine 118 and cysteine 121. Substrate is bound at residue tyrosine 126. The region spanning 127-251 (PQIAPCIIVG…IARRLIEDTI (125 aa)) is the Nudix hydrolase domain. 3 residues coordinate a divalent metal cation: alanine 160, glutamate 176, and glutamate 180. The short motif at 161–182 (GFVEVGETLEEAVVREVMEESN) is the Nudix box element. Substrate is bound at residue 194-201 (QPWPFPHS). Glutamate 221 is an a divalent metal cation binding site. Substrate is bound at residue alanine 243.

Belongs to the Nudix hydrolase family. NudC subfamily. In terms of assembly, homodimer. Requires Mg(2+) as cofactor. Mn(2+) serves as cofactor. The cofactor is Zn(2+).

It catalyses the reaction a 5'-end NAD(+)-phospho-ribonucleoside in mRNA + H2O = a 5'-end phospho-adenosine-phospho-ribonucleoside in mRNA + beta-nicotinamide D-ribonucleotide + 2 H(+). The enzyme catalyses NAD(+) + H2O = beta-nicotinamide D-ribonucleotide + AMP + 2 H(+). The catalysed reaction is NADH + H2O = reduced beta-nicotinamide D-ribonucleotide + AMP + 2 H(+). Its function is as follows. mRNA decapping enzyme that specifically removes the nicotinamide adenine dinucleotide (NAD) cap from a subset of mRNAs by hydrolyzing the diphosphate linkage to produce nicotinamide mononucleotide (NMN) and 5' monophosphate mRNA. The NAD-cap is present at the 5'-end of some mRNAs and stabilizes RNA against 5'-processing. Has preference for mRNAs with a 5'-end purine. Catalyzes the hydrolysis of a broad range of dinucleotide pyrophosphates. This chain is NAD-capped RNA hydrolase NudC, found in Photorhabdus laumondii subsp. laumondii (strain DSM 15139 / CIP 105565 / TT01) (Photorhabdus luminescens subsp. laumondii).